The following is a 549-amino-acid chain: Phosphoenolpyruvate carboxykinase (ATP) (549 aa).

Residue 250–257 coordinates ATP; that stretch reads GLSGTGKT.

It belongs to the phosphoenolpyruvate carboxykinase (ATP) family. Homotetramer.

It carries out the reaction oxaloacetate + ATP = phosphoenolpyruvate + ADP + CO2. The protein operates within carbohydrate biosynthesis; gluconeogenesis. The chain is Phosphoenolpyruvate carboxykinase (ATP) (PCK1) from Saccharomyces cerevisiae (strain ATCC 204508 / S288c) (Baker's yeast).